The chain runs to 305 residues: Sulfate adenylyltransferase subunit 2 (305 aa).

The protein belongs to the PAPS reductase family. CysD subfamily. As to quaternary structure, heterodimer composed of CysD, the smaller subunit, and CysN.

It catalyses the reaction sulfate + ATP + H(+) = adenosine 5'-phosphosulfate + diphosphate. The protein operates within sulfur metabolism; hydrogen sulfide biosynthesis; sulfite from sulfate: step 1/3. Functionally, with CysN forms the ATP sulfurylase (ATPS) that catalyzes the adenylation of sulfate producing adenosine 5'-phosphosulfate (APS) and diphosphate, the first enzymatic step in sulfur assimilation pathway. APS synthesis involves the formation of a high-energy phosphoric-sulfuric acid anhydride bond driven by GTP hydrolysis by CysN coupled to ATP hydrolysis by CysD. The protein is Sulfate adenylyltransferase subunit 2 of Pseudomonas savastanoi pv. phaseolicola (strain 1448A / Race 6) (Pseudomonas syringae pv. phaseolicola (strain 1448A / Race 6)).